Here is a 956-residue protein sequence, read N- to C-terminus: Glutamate receptor ionotropic, kainate 4 (956 aa).

The signal sequence occupies residues 1 to 20; sequence MPRVSAPLVLLPAWLLMVAC. The Extracellular portion of the chain corresponds to 21-545; that stretch reads SPHSLRIAAI…YFSSLDPFSP (525 aa). N-linked (GlcNAc...) asparagine glycosylation is found at Asn158, Asn220, Asn272, Asn286, Asn323, Asn408, Asn415, and Asn479. Gly500, Thr502, and Arg507 together coordinate L-glutamate. The helical transmembrane segment at 546–566 threads the bilayer; the sequence is GVWLFMLLAYLAVSCVLFLVA. Residues 567–623 are Cytoplasmic-facing; the sequence is RLTPYEWYSPHPCAQGRCNLLVNQYSLGNSLWFPVGGFMQQGSTIAPRALSTRCVSG. The helical transmembrane segment at 624-644 threads the bilayer; that stretch reads VWWAFTLIIISSYTANLAAFL. The Extracellular portion of the chain corresponds to 645 to 804; sequence TVQRMEVPIE…HRAKGLGMEN (160 aa). The L-glutamate site is built by Ser674, Ser675, and Glu723. N-linked (GlcNAc...) asparagine glycosylation is present at Asn736. Residues 805–825 traverse the membrane as a helical segment; the sequence is IGGIFVVLICGLIVAIFMAML. The Cytoplasmic segment spans residues 826–956; the sequence is EFLWTLRHSE…DKTTNSSEPE (131 aa). The disordered stretch occupies residues 931–956; that stretch reads LRARPSPARSEESLEWDKTTNSSEPE. Basic and acidic residues predominate over residues 939-948; it reads RSEESLEWDK.

The protein belongs to the glutamate-gated ion channel (TC 1.A.10.1) family. GRIK4 subfamily. In terms of assembly, homodimer. Can form functional heteromeric receptors with GRIK1, GRIK2 and GRIK3. Strong expression in hippocampal CA3 pyramidal cells. Low expression in hippocampal dentate granule cells, in layers II, V and VI of the cortex, and in cerebellar Purkinje cells. No expression in the striatum, reticular thalamus, hypothalamus or amygdaloid complex.

It is found in the cell membrane. Its subcellular location is the postsynaptic cell membrane. It localises to the presynaptic cell membrane. In terms of biological role, ionotropic glutamate receptor that functions as a cation-permeable ligand-gated ion channel, gated by L-glutamate and the glutamatergic agonist kainic acid. Cannot form functional channels on its own and shows channel activity only in heteromeric assembly with GRIK1, GRIK2 and GRIK3 subunits. This is Glutamate receptor ionotropic, kainate 4 (Grik4) from Rattus norvegicus (Rat).